Reading from the N-terminus, the 75-residue chain is Putative membrane protein insertion efficiency factor (75 aa).

It belongs to the UPF0161 family.

The protein resides in the cell membrane. Its function is as follows. Could be involved in insertion of integral membrane proteins into the membrane. This chain is Putative membrane protein insertion efficiency factor, found in Bacillus velezensis (strain DSM 23117 / BGSC 10A6 / LMG 26770 / FZB42) (Bacillus amyloliquefaciens subsp. plantarum).